The primary structure comprises 209 residues: Orotate phosphoribosyltransferase (209 aa).

Residues Arg96, Lys100, His102, and 122–130 (EDLISTGGS) contribute to the 5-phospho-alpha-D-ribose 1-diphosphate site. An orotate-binding site is contributed by Ser126.

This sequence belongs to the purine/pyrimidine phosphoribosyltransferase family. PyrE subfamily. In terms of assembly, homodimer. The cofactor is Mg(2+).

The catalysed reaction is orotidine 5'-phosphate + diphosphate = orotate + 5-phospho-alpha-D-ribose 1-diphosphate. It functions in the pathway pyrimidine metabolism; UMP biosynthesis via de novo pathway; UMP from orotate: step 1/2. Functionally, catalyzes the transfer of a ribosyl phosphate group from 5-phosphoribose 1-diphosphate to orotate, leading to the formation of orotidine monophosphate (OMP). The protein is Orotate phosphoribosyltransferase of Lactococcus lactis subsp. lactis (strain IL1403) (Streptococcus lactis).